Reading from the N-terminus, the 590-residue chain is MQNQSVQQANISIMSSFSGSKKVYAEGSSPDIRVPMREISLSATTGAFGEEENAPVRVYDTSGPYTDPDVQIDIHEGLGALRTKWITGRGDVEEYNGRIVKPEDNGYKKEDHAAEYPGLQRKPLRAKPGKNVTQLHYARKGIITPEMEFIAIREHVSPEFVREEVASGRAIIPSNVNHPESEPMIIGRNFHVKINANIGNSAVTSSIEEEVEKMTWAIRWGADTMMDLSTGKDIHTTREWIIRNCPVPVGTVPIYQALEKVNGIAEDLTWDIYRDTLIEQAEQGVDYFTIHAGVLLRYVPLTAKRTTGIVSRGGAIMAQWCLAHHQESFLYTHFEEICEIMKTYDIAFSLGDGLRPGSIADANDEAQFAELETLGELTEIAWKHDVQVMIEGPGHVPMHKIKENMDKQLEICKEAPFYTLGPLTTDIAPGYDHITSAIGAAMIGWYGTAMLCYVTPKEHLGLPNRDDVREGVITYKIAAHAADLAKGHPGAQIRDDALSKARFEFRWRDQFHLSLDPERAMEYHDETLPAEGAKTAHFCSMCGPKFCSMRISQDIRDYAKENGLTEDEAVNEGLKEKAKEFAEKGSRLYQ.

Substrate is bound by residues asparagine 197, methionine 226, tyrosine 255, histidine 291, 311-313 (SRG), 352-355 (DGLR), and glutamate 391. A Zn(2+)-binding site is contributed by histidine 395. Residue tyrosine 418 coordinates substrate. Histidine 459 is a Zn(2+) binding site. 3 residues coordinate [4Fe-4S] cluster: cysteine 539, cysteine 542, and cysteine 547.

It belongs to the ThiC family. Requires [4Fe-4S] cluster as cofactor.

It carries out the reaction 5-amino-1-(5-phospho-beta-D-ribosyl)imidazole + S-adenosyl-L-methionine = 4-amino-2-methyl-5-(phosphooxymethyl)pyrimidine + CO + 5'-deoxyadenosine + formate + L-methionine + 3 H(+). The protein operates within cofactor biosynthesis; thiamine diphosphate biosynthesis. Its function is as follows. Catalyzes the synthesis of the hydroxymethylpyrimidine phosphate (HMP-P) moiety of thiamine from aminoimidazole ribotide (AIR) in a radical S-adenosyl-L-methionine (SAM)-dependent reaction. This Bacillus velezensis (strain DSM 23117 / BGSC 10A6 / LMG 26770 / FZB42) (Bacillus amyloliquefaciens subsp. plantarum) protein is Phosphomethylpyrimidine synthase.